The sequence spans 105 residues: Met repressor (105 aa).

It belongs to the MetJ family. Homodimer.

Its subcellular location is the cytoplasm. Functionally, this regulatory protein, when combined with SAM (S-adenosylmethionine) represses the expression of the methionine regulon and of enzymes involved in SAM synthesis. The polypeptide is Met repressor (Yersinia pestis bv. Antiqua (strain Antiqua)).